The primary structure comprises 468 residues: MDISYIFVICLMALCSGGSSLSQVEGKQKSGRGRGSMWWGIAKVGEPNNITPIMYMDPAIHSTLRRKQRRLVRDNPGVLGALVKGANLAISECQHQFRNRRWNCSTRNFSRGKNLFGKIVDRGCRETSFIYAITSAAVTHSIARACSEGTIESCTCDYSHQSRSPQANHQAGSVAGVRDWEWGGCSDNIGFGFKFSREFVDTGERGRNLREKMNLHNNEAGRAHVQAEMRQECKCHGMSGSCTVKTCWMRLANFRVIGDNLKARFDGATRVQVTNSLRATNALAPVSPNAAGSNSVGSNGLIIPQSGLVYGEEEERMLNDHMPDILLENSHPISKIHHPNMPSPNSLPQAGQRGGRNGRRQGRKHNRYHFQLNPHNPEHKPPGSKDLVYLEPSPSFCEKNLRQGILGTHGRQCNETSLGVDGCGLMCCGRGYRRDEVVVVERCACTFHWCCEVKCKLCRTKKVIYTCL.

The N-terminal stretch at 1–17 is a signal peptide; sequence MDISYIFVICLMALCSG. The binds porcupine stretch occupies residues 83 to 106; sequence VKGANLAISECQHQFRNRRWNCST. The cysteines at positions 93 and 104 are disulfide-linked. Asparagine 103 and asparagine 108 each carry an N-linked (GlcNAc...) asparagine glycan. 4 disulfides stabilise this stretch: cysteine 146/cysteine 154, cysteine 156/cysteine 185, cysteine 233/cysteine 247, and cysteine 235/cysteine 242. Serine 239 is lipidated: O-palmitoleoyl serine; by PORCN. Residues 333-362 form a disordered region; sequence ISKIHHPNMPSPNSLPQAGQRGGRNGRRQG. 6 disulfide bridges follow: cysteine 397–cysteine 428, cysteine 413–cysteine 423, cysteine 427–cysteine 467, cysteine 443–cysteine 458, cysteine 445–cysteine 455, and cysteine 450–cysteine 451. The N-linked (GlcNAc...) asparagine glycan is linked to asparagine 414.

This sequence belongs to the Wnt family. As to quaternary structure, monomer; folds by intramolecular disulfide bonds. Interacts with porcupine (por). Interacts with wls; in the Golgi. Interacts with en. Interacts with the proteoglycan Cow (heparan sulfate-bound form); this stabilizes wg and promotes its extracellular distribution. Interacts with peg; the interaction facilitates short-range diffusion of wg. Palmitoleoylated by porcupine. The lipid group functions as a sorting signal, targeting the ligand to polarized vesicles that transport wg to unique sites at the cell surface. Depalmitoleoylated by notum, leading to inhibit Wnt signaling pathway. Post-translationally, major form is glycosylated at 2 sites, glycosylation is stimulated by porcupine at the ER. In terms of tissue distribution, segmented expression in embryos. In embryonic tracheal cells, expression is in stripes flanking the tracheal placode.

The protein localises to the secreted. It is found in the synapse. It localises to the membrane. The protein resides in the extracellular space. Its subcellular location is the extracellular matrix. Its function is as follows. Binds as a ligand to a family of frizzled seven-transmembrane receptors and acts through a cascade of genes on the nucleus. Segment polarity protein. May be a growth factor. Acts on neighboring cells to regulate at least one gene, the homeobox segmentation gene engrailed. Wg signal represses arm phosphorylation. Wg signaling operates by inactivating the sgg repression of engrailed autoactivation. Wg and Wnt2 have a role in the developing trachea and together are responsible for all dorsal trunk formation. Wg also acts in the developing epidermis. Acts as a morphogen, and diffuses long distances despite its lipidation. Lipophorin is required for diffusion, probably by acting as vehicle for its movement, explaining how it can spread over long distances despite its lipidation. In non-neuronal cells, wls directs wg secretion via clathrin-mediated endocytosis and the retromer complex (a conserved protein complex consisting of Vps26 and Vps35) to sustain a wls traffic loop encompassing the Golgi, the cell surface, an endocytic compartment and a retrograde route leading back to the Golgi. In neuronal cells (the larval motorneuron NMJ), wg signal moves across the synapse through the release of wls-containing exosome-like vesicles. The polypeptide is Protein wingless (wg) (Drosophila melanogaster (Fruit fly)).